Here is a 370-residue protein sequence, read N- to C-terminus: Histidinol-phosphate aminotransferase (370 aa).

At Lys-229 the chain carries N6-(pyridoxal phosphate)lysine.

This sequence belongs to the class-II pyridoxal-phosphate-dependent aminotransferase family. Histidinol-phosphate aminotransferase subfamily. As to quaternary structure, homodimer. The cofactor is pyridoxal 5'-phosphate.

It catalyses the reaction L-histidinol phosphate + 2-oxoglutarate = 3-(imidazol-4-yl)-2-oxopropyl phosphate + L-glutamate. It participates in amino-acid biosynthesis; L-histidine biosynthesis; L-histidine from 5-phospho-alpha-D-ribose 1-diphosphate: step 7/9. The chain is Histidinol-phosphate aminotransferase from Helicobacter hepaticus (strain ATCC 51449 / 3B1).